The primary structure comprises 155 residues: Troponin C, isoform 3 (155 aa).

EF-hand domains lie at 11-46 (EQIA…MGQP), 47-82 (FDKK…FIVE), 87-122 (AMQK…LDDQ), and 123-155 (LTEQ…MTGE). The Ca(2+) site is built by Asp-60, Asp-62, Ser-64, Arg-66, and Glu-71. Ca(2+) is bound by residues Asp-136, Asp-138, Ser-140, Thr-142, and Glu-147.

It belongs to the troponin C family. Present in both larval and adult muscles.

The protein is Troponin C, isoform 3 (TpnC73F) of Drosophila melanogaster (Fruit fly).